Here is a 2415-residue protein sequence, read N- to C-terminus: Spectrin alpha chain (2415 aa).

Spectrin repeat units lie at residues 48-150 (RFQY…KLQQ), 154-254 (LVQF…QEKL), 258-362 (HEIQ…KLDE), 366-464 (LHRF…DRRI), 471-574 (DLQL…LLED), 577-679 (RYQQ…KLNE), 683-784 (QQQF…QHLL), 788-890 (QVQQ…QDLD), and 894-963 (QAHQ…RQQE). An SH3 domain is found at 970-1029 (TGKECVVALYDYTEKSPREVSMKKGDVLTLLNSNNKDWWKVEVNDRQGFVPAAYIKKIDA). Serine 1032 and serine 1034 each carry phosphoserine. Spectrin repeat units follow at residues 1079–1177 (VREA…ASQL), 1181–1284 (HEVQ…EKLL), 1287–1391 (YDLQ…QLEQ), 1394–1496 (DLQL…SRLG), 1500–1604 (TLQQ…KLKE), 1608–1710 (QRTY…RLNE), 1714–1816 (LHQF…KLDE), 1820–1921 (YQQF…GALL), 1926–2028 (YLQF…DRLL), 2040–2141 (LYLT…DGEL), and 2154–2252 (LRKE…NLEQ). EF-hand domains follow at residues 2265 to 2300 (DSLK…LGYD) and 2308 to 2343 (QPDP…KETE). Aspartate 2278, aspartate 2280, serine 2282, lysine 2284, glutamate 2289, aspartate 2321, asparagine 2323, aspartate 2325, tyrosine 2327, and glutamate 2332 together coordinate Ca(2+).

The protein belongs to the spectrin family. In terms of assembly, native spectrin molecule is a tetramer composed of two antiparallel heterodimers joined head to head so that each end of the native molecule includes the C-terminus of the alpha subunit and the N-terminus of the beta subunit. Interacts with calmodulin in a calcium-dependent manner, interacts with F-actin and also interacts with Lva. Interacts with Ten-m. A substantial pool of maternal protein in the egg undergoes dynamic changes in distribution early in embryogenesis. In gastrulated embryo, the highest level of protein is found in the respiratory tract cells and the lowest in parts of the forming gut.

It is found in the cytoplasm. Its subcellular location is the cytoskeleton. It localises to the golgi apparatus. The protein resides in the cell projection. The protein localises to the cilium. It is found in the flagellum. Functionally, spectrin is the major constituent of the cytoskeletal network underlying the erythrocyte plasma membrane. It associates with band 4.1 and actin to form the cytoskeletal superstructure of the erythrocyte plasma membrane. Essential for larval survival and development. Stabilizes cell to cell interactions that are critical for the maintenance of cell shape and subcellular organization within embryonic tissues. Lva and spectrin may form a Golgi-based scaffold that mediates interaction of Golgi bodies with microtubules and facilitates Golgi-derived membrane secretion required for the formation of furrows during cellularization. The chain is Spectrin alpha chain (alpha-Spec) from Drosophila melanogaster (Fruit fly).